Here is a 156-residue protein sequence, read N- to C-terminus: Ribosomal RNA large subunit methyltransferase H (156 aa).

Residues Leu73, Gly104, and Leu123–Leu128 contribute to the S-adenosyl-L-methionine site.

It belongs to the RNA methyltransferase RlmH family. As to quaternary structure, homodimer.

The protein resides in the cytoplasm. The enzyme catalyses pseudouridine(1915) in 23S rRNA + S-adenosyl-L-methionine = N(3)-methylpseudouridine(1915) in 23S rRNA + S-adenosyl-L-homocysteine + H(+). In terms of biological role, specifically methylates the pseudouridine at position 1915 (m3Psi1915) in 23S rRNA. The protein is Ribosomal RNA large subunit methyltransferase H of Shewanella baltica (strain OS223).